Consider the following 763-residue polypeptide: F-box protein SKP2 (763 aa).

The F-box domain maps to 54–100 (KSSLMCLPTKVLLLILRTLDFNTLVTLCQVNSRFYNLITNEFLFQNV). At Thr594 the chain carries Phosphothreonine.

Interacts with SKP1. Component of the probable SCF(SKP2) complex containing CDC53, SKP1, RBX1 and SKP2. May interact with ribosomes.

Its subcellular location is the cytoplasm. It functions in the pathway protein modification; protein ubiquitination. Functionally, substrate recognition component of a SCF (SKP1-CUL1-F-box protein) E3 ubiquitin-protein ligase complex which mediates the ubiquitination and subsequent proteasomal degradation of target proteins. Probably recognizes and binds to phosphorylated target proteins. Regulates protein levels of sulfur metabolism enzymes. The SCF(SKP2) complex may regulate some transcription factors or regulators of cysteine and methionine biosynthesis. The protein is F-box protein SKP2 (SKP2) of Saccharomyces cerevisiae (strain ATCC 204508 / S288c) (Baker's yeast).